The following is a 287-amino-acid chain: 4-hydroxybenzoate octaprenyltransferase (287 aa).

6 helical membrane passes run 30-50 (ALWIASDGHPTWPLLVIFTVG), 89-109 (WEAVALAAALSLLAFLLILPL), 133-153 (FFAIPQAYLGIAFGFGIPMAF), 158-178 (GHVPLLAWVMLLANVFWSVAY), 199-221 (ALTFGRFDVAAIMICYAATLGIY), and 267-287 (NNWLGGALFVGIAAHYAAGSF).

It belongs to the UbiA prenyltransferase family. Requires Mg(2+) as cofactor.

Its subcellular location is the cell inner membrane. It carries out the reaction all-trans-octaprenyl diphosphate + 4-hydroxybenzoate = 4-hydroxy-3-(all-trans-octaprenyl)benzoate + diphosphate. Its pathway is cofactor biosynthesis; ubiquinone biosynthesis. Functionally, catalyzes the prenylation of para-hydroxybenzoate (PHB) with an all-trans polyprenyl group. Mediates the second step in the final reaction sequence of ubiquinone-8 (UQ-8) biosynthesis, which is the condensation of the polyisoprenoid side chain with PHB, generating the first membrane-bound Q intermediate 3-octaprenyl-4-hydroxybenzoate. The protein is 4-hydroxybenzoate octaprenyltransferase of Paraburkholderia phytofirmans (strain DSM 17436 / LMG 22146 / PsJN) (Burkholderia phytofirmans).